The sequence spans 283 residues: Thymidylate synthase (283 aa).

Residue Arg22 participates in dUMP binding. Residue Cys160 is the Nucleophile of the active site. DUMP is bound by residues 180 to 183 (RSAD), Asn191, and 221 to 223 (HIY). Asp183 provides a ligand contact to (6R)-5,10-methylene-5,6,7,8-tetrahydrofolate. Ser282 lines the (6R)-5,10-methylene-5,6,7,8-tetrahydrofolate pocket.

The protein belongs to the thymidylate synthase family. Bacterial-type ThyA subfamily. Homodimer.

The protein localises to the cytoplasm. The enzyme catalyses dUMP + (6R)-5,10-methylene-5,6,7,8-tetrahydrofolate = 7,8-dihydrofolate + dTMP. It participates in pyrimidine metabolism; dTTP biosynthesis. Functionally, catalyzes the reductive methylation of 2'-deoxyuridine-5'-monophosphate (dUMP) to 2'-deoxythymidine-5'-monophosphate (dTMP) while utilizing 5,10-methylenetetrahydrofolate (mTHF) as the methyl donor and reductant in the reaction, yielding dihydrofolate (DHF) as a by-product. This enzymatic reaction provides an intracellular de novo source of dTMP, an essential precursor for DNA biosynthesis. In Glaesserella parasuis serovar 5 (strain SH0165) (Haemophilus parasuis), this protein is Thymidylate synthase.